We begin with the raw amino-acid sequence, 146 residues long: MKKTKFLLVAVDILPEAIRKTAEVKELLSKRPELTVNEAVEKVGISRSAFYKYKDGVFPFYHKASGKIITLALNLEHRAGVLSKVLNFIAQYQGNVLTINQNLPLGGIANVTISIETEEMKVSIEELLEALSQMDGVSKVELVGQS.

The ACT domain occupies 70–145 (TLALNLEHRA…GVSKVELVGQ (76 aa)).

It belongs to the UPF0735 family.

This Carboxydothermus hydrogenoformans (strain ATCC BAA-161 / DSM 6008 / Z-2901) protein is UPF0735 ACT domain-containing protein CHY_1913.